The following is a 216-amino-acid chain: Leucyl/phenylalanyl-tRNA--protein transferase (216 aa).

Belongs to the L/F-transferase family.

The protein localises to the cytoplasm. The enzyme catalyses N-terminal L-lysyl-[protein] + L-leucyl-tRNA(Leu) = N-terminal L-leucyl-L-lysyl-[protein] + tRNA(Leu) + H(+). It catalyses the reaction N-terminal L-arginyl-[protein] + L-leucyl-tRNA(Leu) = N-terminal L-leucyl-L-arginyl-[protein] + tRNA(Leu) + H(+). The catalysed reaction is L-phenylalanyl-tRNA(Phe) + an N-terminal L-alpha-aminoacyl-[protein] = an N-terminal L-phenylalanyl-L-alpha-aminoacyl-[protein] + tRNA(Phe). Functionally, functions in the N-end rule pathway of protein degradation where it conjugates Leu, Phe and, less efficiently, Met from aminoacyl-tRNAs to the N-termini of proteins containing an N-terminal arginine or lysine. This Maricaulis maris (strain MCS10) (Caulobacter maris) protein is Leucyl/phenylalanyl-tRNA--protein transferase.